The chain runs to 312 residues: DNA-directed RNA polymerase subunit alpha (312 aa).

The interval 1-226 (MIEFEKPIIT…EHLNLFTDLT (226 aa)) is alpha N-terminal domain (alpha-NTD). The interval 242–312 (NDEKLLDRTI…DLGLGLKNDK (71 aa)) is alpha C-terminal domain (alpha-CTD).

The protein belongs to the RNA polymerase alpha chain family. Homodimer. The RNAP catalytic core consists of 2 alpha, 1 beta, 1 beta' and 1 omega subunit. When a sigma factor is associated with the core the holoenzyme is formed, which can initiate transcription.

The catalysed reaction is RNA(n) + a ribonucleoside 5'-triphosphate = RNA(n+1) + diphosphate. In terms of biological role, DNA-dependent RNA polymerase catalyzes the transcription of DNA into RNA using the four ribonucleoside triphosphates as substrates. The chain is DNA-directed RNA polymerase subunit alpha from Streptococcus thermophilus (strain CNRZ 1066).